The following is a 478-amino-acid chain: Ribosomal RNA small subunit methyltransferase F (478 aa).

Residues 125–131 (AAAPGSK), glutamate 149, aspartate 176, and aspartate 194 contribute to the S-adenosyl-L-methionine site. The active-site Nucleophile is the cysteine 247.

The protein belongs to the class I-like SAM-binding methyltransferase superfamily. RsmB/NOP family.

The protein localises to the cytoplasm. It carries out the reaction cytidine(1407) in 16S rRNA + S-adenosyl-L-methionine = 5-methylcytidine(1407) in 16S rRNA + S-adenosyl-L-homocysteine + H(+). Functionally, specifically methylates the cytosine at position 1407 (m5C1407) of 16S rRNA. This Serratia proteamaculans (strain 568) protein is Ribosomal RNA small subunit methyltransferase F.